Here is a 704-residue protein sequence, read N- to C-terminus: mRNA (2'-O-methyladenosine-N(6)-)-methyltransferase (704 aa).

The tract at residues 1–33 (MANENHGSPREEASLLSHSPGTSNQSQPCSPKP) is disordered. Positions 16–29 (LSHSPGTSNQSQPC) are enriched in polar residues. Serine 30 is subject to Phosphoserine. In terms of domain architecture, WW spans 43–77 (ELVHAGWEKCWSRRENRPYYFNRFTNQSLWEMPVL). The interval 88–151 (GLNATPLPQD…PSSPSIPGTP (64 aa)) is disordered. The Nuclear localization signal motif lies at 109–113 (KPRKR). A Phosphoserine modification is found at serine 116. The segment covering 136 to 149 (PTGQSVPSSPSIPG) has biased composition (polar residues). Threonine 152 is subject to Phosphothreonine. 2 residues coordinate substrate: arginine 235 and arginine 265. Residue 553-556 (NPPF) participates in S-adenosyl-L-methionine binding. Residues glutamate 558 and 588-592 (WREPP) contribute to the substrate site. 614–616 (FEH) contributes to the S-adenosyl-L-methionine binding site. The tract at residues 663 to 704 (LSAAYRQSGRSHSSGSSSSSSSEAKDRDSGREQGPSREPHPT) is disordered. Positions 669–684 (QSGRSHSSGSSSSSSS) match the Nuclear localization signal motif. A compositionally biased stretch (low complexity) spans 670–684 (SGRSHSSGSSSSSSS). Positions 685–704 (EAKDRDSGREQGPSREPHPT) are enriched in basic and acidic residues.

Belongs to the CAPAM family. Interacts with POLR2A; interacts with the phosphorylated C-terminal domain (CTD) of POLR2A. As to expression, ubiquitous.

Its subcellular location is the nucleus. It catalyses the reaction a 5'-end (N(7)-methyl 5'-triphosphoguanosine)-(2'-O-methyladenosine) in mRNA + S-adenosyl-L-methionine = a 5'-end (N(7)-methyl 5'-triphosphoguanosine)-(N(6),2'-O-dimethyladenosine) in mRNA + S-adenosyl-L-homocysteine + H(+). Cap-specific adenosine methyltransferase activity is inhibited by zinc. In terms of biological role, cap-specific adenosine methyltransferase that catalyzes formation of N(6),2'-O-dimethyladenosine cap (m6A(m)) by methylating the adenosine at the second transcribed position of capped mRNAs. Recruited to the early elongation complex of RNA polymerase II (RNAPII) via interaction with POLR2A and mediates formation of m6A(m) co-transcriptionally. The chain is mRNA (2'-O-methyladenosine-N(6)-)-methyltransferase from Homo sapiens (Human).